The following is a 182-amino-acid chain: Lipoprotein signal peptidase (182 aa).

Helical transmembrane passes span 12–32 (VAVF…TKAW), 68–88 (ATWV…VAGV), and 91–111 (ISMK…GNLI). Catalysis depends on residues D127 and D140. Residues 135–155 (VGNVADIYLVVAGVVLVILIL) form a helical membrane-spanning segment.

Belongs to the peptidase A8 family.

The protein resides in the cell membrane. It carries out the reaction Release of signal peptides from bacterial membrane prolipoproteins. Hydrolyzes -Xaa-Yaa-Zaa-|-(S,diacylglyceryl)Cys-, in which Xaa is hydrophobic (preferably Leu), and Yaa (Ala or Ser) and Zaa (Gly or Ala) have small, neutral side chains.. Its pathway is protein modification; lipoprotein biosynthesis (signal peptide cleavage). Functionally, this protein specifically catalyzes the removal of signal peptides from prolipoproteins. The polypeptide is Lipoprotein signal peptidase (Bifidobacterium longum subsp. infantis (strain ATCC 15697 / DSM 20088 / JCM 1222 / NCTC 11817 / S12)).